The chain runs to 303 residues: Peroxisomal trans-2-enoyl-CoA reductase (303 aa).

23 to 47 (VTGGATGIGKAIVKELLELGSNVVI) is a binding site for NADP(+). Lys-32 bears the N6-succinyllysine mark. At Ser-49 the chain carries Phosphoserine. Tyr-179 serves as the catalytic Proton acceptor. At Tyr-179 the chain carries Phosphotyrosine. The Microbody targeting signal motif lies at 301–303 (AKL).

It belongs to the short-chain dehydrogenases/reductases (SDR) family. As to quaternary structure, interacts with PEX5, probably required to target it into peroxisomes.

It is found in the peroxisome. The catalysed reaction is a (2E)-enoyl-CoA + NADPH + H(+) = a 2,3-saturated acyl-CoA + NADP(+). It carries out the reaction (2E)-decenoyl-CoA + NADPH + H(+) = decanoyl-CoA + NADP(+). The enzyme catalyses (2E)-hexenoyl-CoA + NADPH + H(+) = hexanoyl-CoA + NADP(+). It catalyses the reaction (2E)-octenoyl-CoA + NADPH + H(+) = octanoyl-CoA + NADP(+). The catalysed reaction is (2E)-dodecenoyl-CoA + NADPH + H(+) = dodecanoyl-CoA + NADP(+). It carries out the reaction (2E)-tetradecenoyl-CoA + NADPH + H(+) = tetradecanoyl-CoA + NADP(+). Its pathway is lipid metabolism; fatty acid biosynthesis. In terms of biological role, participates in chain elongation of fatty acids. Catalyzes the reduction of trans-2-enoyl-CoAs of varying chain lengths from 6:1 to 16:1, having maximum activity with 10:1 CoA. Has no 2,4-dienoyl-CoA reductase activity. This chain is Peroxisomal trans-2-enoyl-CoA reductase, found in Homo sapiens (Human).